A 967-amino-acid polypeptide reads, in one-letter code: Isoleucine--tRNA ligase (967 aa).

The short motif at 64–74 (PYANGNIHIGH) is the 'HIGH' region element. Glu-600 lines the L-isoleucyl-5'-AMP pocket. The 'KMSKS' region signature appears at 641–645 (KQSKS). Residue Lys-644 participates in ATP binding.

The protein belongs to the class-I aminoacyl-tRNA synthetase family. IleS type 1 subfamily. As to quaternary structure, monomer.

It is found in the cytoplasm. The catalysed reaction is tRNA(Ile) + L-isoleucine + ATP = L-isoleucyl-tRNA(Ile) + AMP + diphosphate. In terms of biological role, catalyzes the attachment of isoleucine to tRNA(Ile). As IleRS can inadvertently accommodate and process structurally similar amino acids such as valine, to avoid such errors it has two additional distinct tRNA(Ile)-dependent editing activities. One activity is designated as 'pretransfer' editing and involves the hydrolysis of activated Val-AMP. The other activity is designated 'posttransfer' editing and involves deacylation of mischarged Val-tRNA(Ile). In Agrobacterium fabrum (strain C58 / ATCC 33970) (Agrobacterium tumefaciens (strain C58)), this protein is Isoleucine--tRNA ligase.